Consider the following 464-residue polypeptide: 26S proteasome regulatory subunit 7 homolog B (464 aa).

246 to 253 (GPPGSGKT) contacts ATP. Residue Lys452 forms a Glycyl lysine isopeptide (Lys-Gly) (interchain with G-Cter in ubiquitin) linkage.

The protein belongs to the AAA ATPase family. In terms of assembly, component of the 19S regulatory particle (RP/PA700) base subcomplex of the 26S proteasome. The 26S proteasome is composed of a core protease (CP), known as the 20S proteasome, capped at one or both ends by the 19S regulatory particle (RP/PA700). The RP/PA700 complex is composed of at least 17 different subunits in two subcomplexes, the base and the lid, which form the portions proximal and distal to the 20S proteolytic core, respectively.

The protein resides in the cytoplasm. It is found in the nucleus. In terms of biological role, the 26S proteasome is involved in the ATP-dependent degradation of ubiquitinated proteins. The regulatory (or ATPase) complex confers ATP dependency and substrate specificity to the 26S complex. The chain is 26S proteasome regulatory subunit 7 homolog B (RPT1B) from Arabidopsis thaliana (Mouse-ear cress).